The following is a 106-amino-acid chain: Large ribosomal subunit protein uL24 (106 aa).

This sequence belongs to the universal ribosomal protein uL24 family. In terms of assembly, part of the 50S ribosomal subunit.

Its function is as follows. One of two assembly initiator proteins, it binds directly to the 5'-end of the 23S rRNA, where it nucleates assembly of the 50S subunit. One of the proteins that surrounds the polypeptide exit tunnel on the outside of the subunit. This Erythrobacter litoralis (strain HTCC2594) protein is Large ribosomal subunit protein uL24.